We begin with the raw amino-acid sequence, 69 residues long: Large ribosomal subunit protein bL31 (69 aa).

Cysteine 17, cysteine 19, cysteine 37, and cysteine 40 together coordinate Zn(2+).

Belongs to the bacterial ribosomal protein bL31 family. Type A subfamily. Part of the 50S ribosomal subunit. Zn(2+) is required as a cofactor.

Binds the 23S rRNA. This is Large ribosomal subunit protein bL31 from Caldicellulosiruptor bescii (strain ATCC BAA-1888 / DSM 6725 / KCTC 15123 / Z-1320) (Anaerocellum thermophilum).